The sequence spans 140 residues: MSSTKAPVPPTQAEIQQIQDQLIKARDAFQVHETELQKLSASRSKLLTQLNENEMVKKEFDLLESEAKIYKLNGPVLFKQTKEEAENTITSRLDIINNNLKTIETNFKDIEKKAMEQRNKIFEYQNKIRSLTAPPPPQAQ.

It belongs to the prefoldin subunit beta family. Heterohexamer of two PFD-alpha type and four PFD-beta type subunits.

Functionally, binds specifically to cytosolic chaperonin (c-CPN) and transfers target proteins to it. Binds to nascent polypeptide chain and promotes folding in an environment in which there are many competing pathways for nonnative proteins. The polypeptide is Probable prefoldin subunit 6 (pfdn6) (Dictyostelium discoideum (Social amoeba)).